Reading from the N-terminus, the 188-residue chain is dCTP deaminase (188 aa).

109–114 serves as a coordination point for dCTP; it reads KSTYAR. Residue E135 is the Proton donor/acceptor of the active site. Positions 154, 168, and 178 each coordinate dCTP.

It belongs to the dCTP deaminase family. In terms of assembly, homotrimer.

The catalysed reaction is dCTP + H2O + H(+) = dUTP + NH4(+). The protein operates within pyrimidine metabolism; dUMP biosynthesis; dUMP from dCTP (dUTP route): step 1/2. Functionally, catalyzes the deamination of dCTP to dUTP. This is dCTP deaminase from Helicobacter pylori (strain J99 / ATCC 700824) (Campylobacter pylori J99).